Here is a 512-residue protein sequence, read N- to C-terminus: L-aspartate oxidase (512 aa).

Residues 17–20 (SGLA) and 46–53 (SSAWAQGG) contribute to the FAD site. Arg-278 (proton donor/acceptor) is an active-site residue. Residues Glu-361 and 377–378 (SL) each bind FAD.

This sequence belongs to the FAD-dependent oxidoreductase 2 family. NadB subfamily. Requires FAD as cofactor.

It localises to the cytoplasm. It carries out the reaction L-aspartate + O2 = iminosuccinate + H2O2. It functions in the pathway cofactor biosynthesis; NAD(+) biosynthesis; iminoaspartate from L-aspartate (oxidase route): step 1/1. Functionally, catalyzes the oxidation of L-aspartate to iminoaspartate, the first step in the de novo biosynthesis of NAD(+). In Xylella fastidiosa (strain 9a5c), this protein is L-aspartate oxidase (nadB).